Consider the following 522-residue polypeptide: Sugar carrier protein A (522 aa).

Over 1–22 (MAGGSLAPAGVAKERAEQYQGK) the chain is Cytoplasmic. Helical transmembrane passes span 23–43 (VTFAVFVACMVAAVGGSIFGY), 87–107 (AFTSSLYLAGLAASLVAGPIT), 121–141 (ISFLIGAALNATAINLAMLLL), 144–164 (IMLGVGIGFGNQAVPLYLSEM), 173–193 (LNIMFQLATTSGIFTANMVNY), 205–225 (LSLGLAAAPALLMTIGGLLLP), 286–306 (LVMAIFMPTFQILTGINIILF), 322–342 (ALYSSAVTGAVLCSSTFISIA), 351–371 (FLLISGGIQMITCQVIVAIIL), 384–404 (SFSVLVVIMICLFVLAFGWSW), 430–450 (AVNLFFTFVIAQSFPSLLCAF), and 453–473 (GIFLFFAGWVTVMTAFVYIFL). The Cytoplasmic portion of the chain corresponds to 474-522 (PETKGVPIEEMIFLWRKHWFWKKIVPGQPEVDDSRESMEMGEAVASRIK).

Belongs to the major facilitator superfamily. Sugar transporter (TC 2.A.1.1) family.

Its subcellular location is the membrane. This Ricinus communis (Castor bean) protein is Sugar carrier protein A (STA).